Reading from the N-terminus, the 1092-residue chain is NAD-specific glutamate dehydrogenase (1092 aa).

Lys626 is an active-site residue.

Belongs to the Glu/Leu/Phe/Val dehydrogenases family. In terms of assembly, homotetramer. Interacts with NNK1. Phosphorylated by a complex containing the NNK1 kinase.

The enzyme catalyses L-glutamate + NAD(+) + H2O = 2-oxoglutarate + NH4(+) + NADH + H(+). Its function is as follows. NAD(+)-dependent glutamate dehydrogenase which degrades glutamate to ammonia and alpha-ketoglutarate. This is NAD-specific glutamate dehydrogenase (GDH2) from Saccharomyces cerevisiae (strain ATCC 204508 / S288c) (Baker's yeast).